The primary structure comprises 639 residues: 3D-(3,5/4)-trihydroxycyclohexane-1,2-dione hydrolase (639 aa).

Residue E65 participates in thiamine diphosphate binding. Residues 437-517 (SLPGDLQRMW…INIILFDNSG (81 aa)) form a thiamine pyrophosphate binding region. Mg(2+)-binding residues include D488 and N515.

Belongs to the TPP enzyme family. Requires Mg(2+) as cofactor. The cofactor is thiamine diphosphate.

It catalyses the reaction 3D-3,5/4-trihydroxycyclohexane-1,2-dione + H2O = 5-deoxy-D-glucuronate + H(+). The protein operates within polyol metabolism; myo-inositol degradation into acetyl-CoA; acetyl-CoA from myo-inositol: step 3/7. Involved in the cleavage of the C1-C2 bond of 3D-(3,5/4)-trihydroxycyclohexane-1,2-dione (THcHDO) to yield 5-deoxy-glucuronate (5DG). The protein is 3D-(3,5/4)-trihydroxycyclohexane-1,2-dione hydrolase of Geobacillus thermodenitrificans (strain NG80-2).